A 244-amino-acid chain; its full sequence is Phosphate propanoyltransferase (244 aa).

52-54 (ISA) serves as a coordination point for CoA. His56 and His58 together coordinate Zn(2+). Arg106 is a CoA binding site. Arg112 is a phosphate binding site. Zn(2+) is bound by residues Glu118, His166, His168, and His214. Residue Asn221 participates in CoA binding.

Belongs to the PduL family. In terms of assembly, full-length protein forms large oligomers. Possible homotrimer and monomer, when purified in the absence of the encapsulation peptide (EP, residues 1-20). The EP may influence oligomerization. Zn(2+) is required as a cofactor.

It localises to the bacterial microcompartment. The enzyme catalyses propanoyl-CoA + phosphate = propanoyl phosphate + CoA. Its function is as follows. Part of a bacterial microcompartment (BMC) locus required for growth on plant and algal sugars, including L-fucose and L-rhamnose. Thought to be active on lactyl-CoA in a lactaldehyde-degradation pathway. CoA is regenerated within the BMC via this enzyme, although there must also be cofactor transport across the BMC. Directly targeted to the BMC. The protein is Phosphate propanoyltransferase of Planctopirus limnophila (strain ATCC 43296 / DSM 3776 / IFAM 1008 / Mu 290) (Planctomyces limnophilus).